A 207-amino-acid polypeptide reads, in one-letter code: Alpha-1-acid glycoprotein 2 (207 aa).

An N-terminal signal peptide occupies residues 1–18 (MALHMILVMVSLLPLLEA). Pyrrolidone carboxylic acid is present on Gln19. N-linked (GlcNAc...) asparagine glycosylation is found at Asn25, Asn34, Asn76, Asn94, and Asn104. Cys91 and Cys184 are disulfide-bonded. A disordered region spans residues 188 to 207 (EKQQLELEKETKKDPEEGQA).

This sequence belongs to the calycin superfamily. Lipocalin family. In terms of tissue distribution, expressed by the liver and secreted in plasma.

It is found in the secreted. Functions as a transport protein in the blood stream. Binds various ligands in the interior of its beta-barrel domain. Appears to function in modulating the activity of the immune system during the acute-phase reaction. In Mus musculus (Mouse), this protein is Alpha-1-acid glycoprotein 2 (Orm2).